The primary structure comprises 300 residues: Geranylgeranyl pyrophosphate synthase (300 aa).

Met-1 carries the N-acetylmethionine modification. 3 residues coordinate isopentenyl diphosphate: Lys-25, Arg-28, and His-57. 2 residues coordinate Mg(2+): Asp-64 and Asp-68. Position 73 (Arg-73) interacts with dimethylallyl diphosphate. Arg-74 is a binding site for isopentenyl diphosphate. Dimethylallyl diphosphate is bound by residues Lys-151, Thr-152, Gln-185, Lys-202, and Lys-212.

This sequence belongs to the FPP/GGPP synthase family. In terms of assembly, homohexamer; trimer of homodimers. Requires Mg(2+) as cofactor. As to expression, abundantly expressed in testis. Found in other tissues to a lower extent. Expressed in dermal fibroblast and skeletal muscle.

The protein resides in the cytoplasm. The protein localises to the perinuclear region. Its subcellular location is the myofibril. It localises to the sarcomere. It is found in the z line. The catalysed reaction is isopentenyl diphosphate + dimethylallyl diphosphate = (2E)-geranyl diphosphate + diphosphate. It catalyses the reaction isopentenyl diphosphate + (2E)-geranyl diphosphate = (2E,6E)-farnesyl diphosphate + diphosphate. The enzyme catalyses isopentenyl diphosphate + (2E,6E)-farnesyl diphosphate = (2E,6E,10E)-geranylgeranyl diphosphate + diphosphate. It functions in the pathway isoprenoid biosynthesis; farnesyl diphosphate biosynthesis; farnesyl diphosphate from geranyl diphosphate and isopentenyl diphosphate: step 1/1. Its pathway is isoprenoid biosynthesis; geranyl diphosphate biosynthesis; geranyl diphosphate from dimethylallyl diphosphate and isopentenyl diphosphate: step 1/1. It participates in isoprenoid biosynthesis; geranylgeranyl diphosphate biosynthesis; geranylgeranyl diphosphate from farnesyl diphosphate and isopentenyl diphosphate: step 1/1. Subject to product inhibition by geranylgeranyl diphosphate. Catalyzes the trans-addition of the three molecules of IPP onto DMAPP to form geranylgeranyl pyrophosphate, an important precursor of carotenoids and geranylated proteins. The sequence is that of Geranylgeranyl pyrophosphate synthase (GGPS1) from Homo sapiens (Human).